Reading from the N-terminus, the 431-residue chain is Glutamate--tRNA ligase 1 (431 aa).

The short motif at 11-21 is the 'HIGH' region element; it reads PSPTGDLHLGG. A 'KMSKS' region motif is present at residues 203–207; that stretch reads KLSKR. An ATP-binding site is contributed by Lys-206.

This sequence belongs to the class-I aminoacyl-tRNA synthetase family. Glutamate--tRNA ligase type 1 subfamily. In terms of assembly, monomer.

It localises to the cytoplasm. The enzyme catalyses tRNA(Glu) + L-glutamate + ATP = L-glutamyl-tRNA(Glu) + AMP + diphosphate. Functionally, catalyzes the attachment of glutamate to tRNA(Glu) in a two-step reaction: glutamate is first activated by ATP to form Glu-AMP and then transferred to the acceptor end of tRNA(Glu). The polypeptide is Glutamate--tRNA ligase 1 (Rubrobacter xylanophilus (strain DSM 9941 / JCM 11954 / NBRC 16129 / PRD-1)).